A 202-amino-acid chain; its full sequence is MTYVVGVTGGIGSGKSAATAEFEKLGITVIDADIVSRQVVMPGTPCLRAIAEHFGRDLLTDKGELDRKALRQKVFSDPAEKDWLNSLLHPAIREEILTQLEQASSPYVILSAPLLLENNLDKYCQRVLVVDVPEELQLQRTIQRDESPKEEVEAIMKAQLSRKARLRKADDILNNESSIDQLRRQVNQLHQRYLAATVAQEE.

The region spanning 4-200 (VVGVTGGIGS…QRYLAATVAQ (197 aa)) is the DPCK domain. 12-17 (GSGKSA) serves as a coordination point for ATP.

This sequence belongs to the CoaE family.

The protein localises to the cytoplasm. The enzyme catalyses 3'-dephospho-CoA + ATP = ADP + CoA + H(+). The protein operates within cofactor biosynthesis; coenzyme A biosynthesis; CoA from (R)-pantothenate: step 5/5. In terms of biological role, catalyzes the phosphorylation of the 3'-hydroxyl group of dephosphocoenzyme A to form coenzyme A. This is Dephospho-CoA kinase from Idiomarina loihiensis (strain ATCC BAA-735 / DSM 15497 / L2-TR).